The primary structure comprises 242 residues: 1-(5-phosphoribosyl)-5-[(5-phosphoribosylamino)methylideneamino] imidazole-4-carboxamide isomerase (242 aa).

Residue Asp8 is the Proton acceptor of the active site. Asp130 functions as the Proton donor in the catalytic mechanism.

The protein belongs to the HisA/HisF family.

The protein localises to the cytoplasm. It carries out the reaction 1-(5-phospho-beta-D-ribosyl)-5-[(5-phospho-beta-D-ribosylamino)methylideneamino]imidazole-4-carboxamide = 5-[(5-phospho-1-deoxy-D-ribulos-1-ylimino)methylamino]-1-(5-phospho-beta-D-ribosyl)imidazole-4-carboxamide. The protein operates within amino-acid biosynthesis; L-histidine biosynthesis; L-histidine from 5-phospho-alpha-D-ribose 1-diphosphate: step 4/9. The chain is 1-(5-phosphoribosyl)-5-[(5-phosphoribosylamino)methylideneamino] imidazole-4-carboxamide isomerase from Acidithiobacillus ferrooxidans (strain ATCC 53993 / BNL-5-31) (Leptospirillum ferrooxidans (ATCC 53993)).